A 281-amino-acid chain; its full sequence is Pantothenate synthetase (281 aa).

Residue 30–37 (MGYLHEGH) coordinates ATP. Residue H37 is the Proton donor of the active site. Q61 is a (R)-pantoate binding site. Q61 is a beta-alanine binding site. Residue 147-150 (GEKD) coordinates ATP. Position 153 (Q153) interacts with (R)-pantoate. ATP is bound by residues V176 and 184–187 (MSSR).

Belongs to the pantothenate synthetase family. As to quaternary structure, homodimer.

It localises to the cytoplasm. The catalysed reaction is (R)-pantoate + beta-alanine + ATP = (R)-pantothenate + AMP + diphosphate + H(+). The protein operates within cofactor biosynthesis; (R)-pantothenate biosynthesis; (R)-pantothenate from (R)-pantoate and beta-alanine: step 1/1. Its function is as follows. Catalyzes the condensation of pantoate with beta-alanine in an ATP-dependent reaction via a pantoyl-adenylate intermediate. This chain is Pantothenate synthetase, found in Desulfatibacillum aliphaticivorans.